Consider the following 540-residue polypeptide: Light-independent protochlorophyllide reductase subunit B (540 aa).

D36 contributes to the [4Fe-4S] cluster binding site. The active-site Proton donor is the D287. 422–423 (GL) serves as a coordination point for substrate.

This sequence belongs to the ChlB/BchB/BchZ family. As to quaternary structure, protochlorophyllide reductase is composed of three subunits; BchL, BchN and BchB. Forms a heterotetramer of two BchB and two BchN subunits. The cofactor is [4Fe-4S] cluster.

The catalysed reaction is chlorophyllide a + oxidized 2[4Fe-4S]-[ferredoxin] + 2 ADP + 2 phosphate = protochlorophyllide a + reduced 2[4Fe-4S]-[ferredoxin] + 2 ATP + 2 H2O. It functions in the pathway porphyrin-containing compound metabolism; bacteriochlorophyll biosynthesis (light-independent). Its function is as follows. Component of the dark-operative protochlorophyllide reductase (DPOR) that uses Mg-ATP and reduced ferredoxin to reduce ring D of protochlorophyllide (Pchlide) to form chlorophyllide a (Chlide). This reaction is light-independent. The NB-protein (BchN-BchB) is the catalytic component of the complex. This chain is Light-independent protochlorophyllide reductase subunit B, found in Rhodopseudomonas palustris (strain TIE-1).